A 211-amino-acid polypeptide reads, in one-letter code: Probable nicotinate-nucleotide adenylyltransferase (211 aa).

This sequence belongs to the NadD family.

The enzyme catalyses nicotinate beta-D-ribonucleotide + ATP + H(+) = deamido-NAD(+) + diphosphate. It functions in the pathway cofactor biosynthesis; NAD(+) biosynthesis; deamido-NAD(+) from nicotinate D-ribonucleotide: step 1/1. In terms of biological role, catalyzes the reversible adenylation of nicotinate mononucleotide (NaMN) to nicotinic acid adenine dinucleotide (NaAD). This is Probable nicotinate-nucleotide adenylyltransferase from Corynebacterium kroppenstedtii (strain DSM 44385 / JCM 11950 / CIP 105744 / CCUG 35717).